A 440-amino-acid chain; its full sequence is Thymidine phosphorylase (440 aa).

The protein belongs to the thymidine/pyrimidine-nucleoside phosphorylase family. In terms of assembly, homodimer.

It catalyses the reaction thymidine + phosphate = 2-deoxy-alpha-D-ribose 1-phosphate + thymine. It functions in the pathway pyrimidine metabolism; dTMP biosynthesis via salvage pathway; dTMP from thymine: step 1/2. The enzymes which catalyze the reversible phosphorolysis of pyrimidine nucleosides are involved in the degradation of these compounds and in their utilization as carbon and energy sources, or in the rescue of pyrimidine bases for nucleotide synthesis. This is Thymidine phosphorylase from Salmonella arizonae (strain ATCC BAA-731 / CDC346-86 / RSK2980).